The following is a 188-amino-acid chain: dTTP/UTP pyrophosphatase (188 aa).

Asp-70 functions as the Proton acceptor in the catalytic mechanism.

It belongs to the Maf family. YhdE subfamily. It depends on a divalent metal cation as a cofactor.

The protein localises to the cytoplasm. It carries out the reaction dTTP + H2O = dTMP + diphosphate + H(+). The enzyme catalyses UTP + H2O = UMP + diphosphate + H(+). Functionally, nucleoside triphosphate pyrophosphatase that hydrolyzes dTTP and UTP. May have a dual role in cell division arrest and in preventing the incorporation of modified nucleotides into cellular nucleic acids. This is dTTP/UTP pyrophosphatase from Clostridium botulinum (strain Alaska E43 / Type E3).